Consider the following 83-residue polypeptide: Cell division protein ZapB (83 aa).

Positions 7–80 (EMLEKLEAKV…RVRTLLGKMD (74 aa)) form a coiled coil.

This sequence belongs to the ZapB family. In terms of assembly, homodimer. The ends of the coiled-coil dimer bind to each other, forming polymers. Interacts with FtsZ.

The protein resides in the cytoplasm. Functionally, non-essential, abundant cell division factor that is required for proper Z-ring formation. It is recruited early to the divisome by direct interaction with FtsZ, stimulating Z-ring assembly and thereby promoting cell division earlier in the cell cycle. Its recruitment to the Z-ring requires functional FtsA or ZipA. The polypeptide is Cell division protein ZapB (Photobacterium profundum (strain SS9)).